We begin with the raw amino-acid sequence, 89 residues long: Dynein light chain 2, cytoplasmic (89 aa).

The protein belongs to the dynein light chain family. As to quaternary structure, homodimer. The cytoplasmic dynein 1 complex consists of two catalytic heavy chains (HCs) and a number of non-catalytic subunits which present intermediate chains (ICs), light intermediate chains (LICs) and light chains (LCs); the composition seems to vary in respect to the IC, LIC and LC composition. The heavy chain homodimer serves as a scaffold for the probable homodimeric assembly of the respective non-catalytic subunits. Dynein ICs and LICs bind directly to the HC dimer and the LCs assemble on the IC dimer. Interacts with DYNC1I1. Interacts with BMF. Component of the myosin V motor complex. Interacts with BCAS1. Interacts with Basson/BSN. Interacts with AMBRA1 (via TQT motifs); tethering AMBRA1 to the cytoskeleton. Interacts with IQUB.

It is found in the cytoplasm. Its subcellular location is the cytoskeleton. Acts as one of several non-catalytic accessory components of the cytoplasmic dynein 1 complex that are thought to be involved in linking dynein to cargos and to adapter proteins that regulate dynein function. Cytoplasmic dynein 1 acts as a motor for the intracellular retrograde motility of vesicles and organelles along microtubules. May play a role in changing or maintaining the spatial distribution of cytoskeletal structures. The protein is Dynein light chain 2, cytoplasmic (DYNLL2) of Homo sapiens (Human).